The following is a 286-amino-acid chain: Hypersensitive-induced response protein 1 (286 aa).

Residue Gly-2 is the site of N-myristoyl glycine attachment. A coiled-coil region spans residues Leu-114–Glu-190.

Self-interacts and forms heteromers. Interacts with NB-LRR class of R proteins before R proteins (e.g. RPS2 or RPM1) are activated by the effectors. Interacts with LRR1.

It is found in the cell membrane. In terms of biological role, positive regulator of hypersensitive response (HR)-like cell death. May be involved in potassium ion channel regulation. This is Hypersensitive-induced response protein 1 from Arabidopsis thaliana (Mouse-ear cress).